The following is a 395-amino-acid chain: GPI-anchor transamidase (395 aa).

An N-terminal signal peptide occupies residues 1–27 (MAVTDSLSRAASTLAAVLLLSFGSVAA). Topologically, residues 28–368 (SHIEDQAEQF…PKLKDWHPPG (341 aa)) are lumenal. Ca(2+)-binding residues include Asp-79, Ile-82, Glu-118, and Asp-120. His-164 (proton donor) is an active-site residue. The active-site Nucleophile; acyl-thioester intermediate is Cys-206. The a protein site is built by Cys-206, Ser-232, and Ser-234. Residues 231–236 (DSLSHQ) form an autoinhibitory loop region. A disulfide bridge connects residues Cys-275 and Cys-280. A helical membrane pass occupies residues 369-385 (GFILGLWALIIMVFFKT). The Cytoplasmic segment spans residues 386–395 (YGIKHMKFIF).

This sequence belongs to the peptidase C13 family. In terms of assembly, heteropentamer. Part of the GPI-anchor transamidase complex, consisting of PIGK, PIGT, PIGS, PIGU and GAA1. Interacts with GPAA1. Interacts with PIGT; this interaction, via a disulfide link, stabilizes the expression of GAA1 and PIGK and links them to PIGS. In terms of processing, the disulfide bond between PIGK/GPI8 and PIGT is important for normal enzyme activity.

Its subcellular location is the endoplasmic reticulum membrane. It functions in the pathway glycolipid biosynthesis; glycosylphosphatidylinositol-anchor biosynthesis. In the absence of proproteins substrates, exists in an inactive state with a disrupted catalytic site by an autoinhibitory loop. The binding of proprotein substrates, particularly the CSP region, to GPI-T triggers concerted conformational changes that alleviate the inhibition by the autoinhibitory loop. Meanwhile, proprotein residues near the omega- site induce the formation of a catalytic cleft for catalysis, following which the products are released and GPI-T reverts to the inactive state. Functionally, catalytic subunit of the glycosylphosphatidylinositol-anchor (GPI-anchor) transamidase (GPI-T) complex that catalyzes the formation of the linkage between a proprotein and a GPI-anchor and participates in GPI anchored protein biosynthesis. Recognizes diverse proproteins at a C-terminal signal peptide (CSP) region that lacks consensus sequence and replaces it with a GPI-anchor via a transamidation reaction. Transamidation catalysis reaction follows a two-phase mechanism. In the acyl-enzyme phase, the carbonyl group of the proproteins's omega-site undergoes a nucleophilic attack forming an enzyme-substrate thioester bond. Followed by a general acid catalysis that allows CSP releasing, regenerating the carbonyl, and forming the acyl-enzyme intermediate. In the GPI-anchor attachment phase, the amino group of the GPI-anchor's ethanolamine phosphate, the one on third mannose (EtNP3), mediates a nucleophilic attack on the carbonyl of the acyl-enzyme intermediate, replacing the CSP, allowing GPI-anchor attachment to the omega-residue, therefore forming the product and freeing the enzyme. This Pongo abelii (Sumatran orangutan) protein is GPI-anchor transamidase.